The following is a 105-amino-acid chain: Pyrimidine/purine nucleoside phosphorylase (105 aa).

It belongs to the nucleoside phosphorylase PpnP family.

It catalyses the reaction a purine D-ribonucleoside + phosphate = a purine nucleobase + alpha-D-ribose 1-phosphate. The catalysed reaction is adenosine + phosphate = alpha-D-ribose 1-phosphate + adenine. It carries out the reaction cytidine + phosphate = cytosine + alpha-D-ribose 1-phosphate. The enzyme catalyses guanosine + phosphate = alpha-D-ribose 1-phosphate + guanine. It catalyses the reaction inosine + phosphate = alpha-D-ribose 1-phosphate + hypoxanthine. The catalysed reaction is thymidine + phosphate = 2-deoxy-alpha-D-ribose 1-phosphate + thymine. It carries out the reaction uridine + phosphate = alpha-D-ribose 1-phosphate + uracil. The enzyme catalyses xanthosine + phosphate = alpha-D-ribose 1-phosphate + xanthine. Catalyzes the phosphorolysis of diverse nucleosides, yielding D-ribose 1-phosphate and the respective free bases. Can use uridine, adenosine, guanosine, cytidine, thymidine, inosine and xanthosine as substrates. Also catalyzes the reverse reactions. This is Pyrimidine/purine nucleoside phosphorylase from Anaeromyxobacter sp. (strain Fw109-5).